Here is a 281-residue protein sequence, read N- to C-terminus: Aldo-keto reductase MMAR_1744 (281 aa).

The active-site Proton donor is tyrosine 56. Leucine 196, isoleucine 234, serine 237, threonine 245, asparagine 246, and arginine 272 together coordinate NADPH.

The protein belongs to the aldo/keto reductase family.

This chain is Aldo-keto reductase MMAR_1744, found in Mycobacterium marinum (strain ATCC BAA-535 / M).